The following is a 245-amino-acid chain: Uridylate kinase (245 aa).

Residue 18-21 participates in ATP binding; it reads KLSG. Glycine 60 is a binding site for UMP. 2 residues coordinate ATP: glycine 61 and arginine 65. Residues aspartate 80 and 141 to 148 contribute to the UMP site; that span reads TGNPFFTT. 3 residues coordinate ATP: threonine 168, tyrosine 174, and aspartate 177.

Belongs to the UMP kinase family. As to quaternary structure, homohexamer.

Its subcellular location is the cytoplasm. It catalyses the reaction UMP + ATP = UDP + ADP. It participates in pyrimidine metabolism; CTP biosynthesis via de novo pathway; UDP from UMP (UMPK route): step 1/1. Inhibited by UTP. Its function is as follows. Catalyzes the reversible phosphorylation of UMP to UDP. The sequence is that of Uridylate kinase from Pseudomonas aeruginosa (strain UCBPP-PA14).